Consider the following 152-residue polypeptide: Large ribosomal subunit protein uL13 (152 aa).

Belongs to the universal ribosomal protein uL13 family. In terms of assembly, part of the 50S ribosomal subunit.

Functionally, this protein is one of the early assembly proteins of the 50S ribosomal subunit, although it is not seen to bind rRNA by itself. It is important during the early stages of 50S assembly. In Wolbachia pipientis wMel, this protein is Large ribosomal subunit protein uL13.